A 350-amino-acid chain; its full sequence is Vancomycin C-type resistance protein VanC2 (350 aa).

Residues Glu-14 and Ser-187 contribute to the active site. An ATP-grasp domain is found at 141 to 343 (HQAAAAIGVQ…YQELLQKLLV (203 aa)). Position 171-226 (171-226 (IQTHGFPVFFKPNEAGSSKGITKVTCVEEIASALKEAFTYCSAVLLQKNIAGVEIG)) interacts with ATP. Residues Asp-297, Glu-310, and Asn-312 each coordinate Mg(2+). 3 residues coordinate Mn(2+): Asp-297, Glu-310, and Asn-312. Ser-321 is a catalytic residue.

It belongs to the D-alanine--D-alanine ligase family. As to quaternary structure, homodimer. The cofactor is Mg(2+). Requires Mn(2+) as cofactor.

The protein resides in the cell membrane. It catalyses the reaction D-serine + D-alanine + ATP = D-alanyl-D-serine + ADP + phosphate + H(+). The protein operates within cell wall biogenesis; peptidoglycan biosynthesis. With respect to regulation, inhibited by D-cycloserine. In terms of biological role, required for low-level resistance to the glycopeptide antibiotic vancomycin. D-alanine--D-alanine ligase of altered specificity, which catalyzes synthesis of D-Ala-D-Ser; produces a peptidoglycan which does not terminate in D-alanine but in D-serine, thus probably reducing affinity for vancomycin. Only insignificant catalytic synthesis of D-Ala-D-Ala in vitro. In Enterococcus casseliflavus (Enterococcus flavescens), this protein is Vancomycin C-type resistance protein VanC2.